Consider the following 147-residue polypeptide: Leghemoglobin-1 (147 aa).

Residues 2–147 (SFTDKQEALV…LATAIKKAMS (146 aa)) form the Globin domain. Tyrosine 25 and tyrosine 30 each carry nitrated tyrosine. Serine 45 is a heme b binding site. Serine 45 bears the Phosphoserine mark. Histidine 62 contacts O2. Heme b is bound by residues lysine 65, histidine 94, and lysine 97. Residue tyrosine 135 is modified to Nitrated tyrosine.

This sequence belongs to the plant globin family. Monomer. Post-translationally, nitrated in effective nodules and particularly in hypoxic conditions; this mechanism may play a protective role in the symbiosis by buffering toxic peroxynitrite NO(2)(-). Nitration level decrease during nodule senescence. In terms of processing, phosphorylation at Ser-45 disrupts the molecular environment of its porphyrin ring oxygen binding pocket, thus leading to a reduced oxygen consumption and to the delivery of oxygen O(2) to symbiosomes. Root nodules.

It localises to the cytoplasm. Its subcellular location is the cytosol. The protein localises to the nucleus. In terms of biological role, leghemoglobin that reversibly binds oxygen O(2) through a pentacoordinated heme iron. In root nodules, facilitates the diffusion of oxygen to the bacteroids while preventing the bacterial nitrogenase from being inactivated by buffering dioxygen, nitric oxide and carbon monoxide, and promoting the formation of reactive oxygen species (ROS, e.g. H(2)O(2)). This role is essential for symbiotic nitrogen fixation (SNF). The sequence is that of Leghemoglobin-1 from Medicago sativa (Alfalfa).